Reading from the N-terminus, the 440-residue chain is L-seryl-tRNA(Sec) selenium transferase (440 aa).

The residue at position 282 (Lys282) is an N6-(pyridoxal phosphate)lysine.

It belongs to the SelA family. Pyridoxal 5'-phosphate serves as cofactor.

It is found in the cytoplasm. It carries out the reaction L-seryl-tRNA(Sec) + selenophosphate + H(+) = L-selenocysteinyl-tRNA(Sec) + phosphate. Its pathway is aminoacyl-tRNA biosynthesis; selenocysteinyl-tRNA(Sec) biosynthesis; selenocysteinyl-tRNA(Sec) from L-seryl-tRNA(Sec) (bacterial route): step 1/1. Converts seryl-tRNA(Sec) to selenocysteinyl-tRNA(Sec) required for selenoprotein biosynthesis. In Campylobacter jejuni subsp. jejuni serotype O:6 (strain 81116 / NCTC 11828), this protein is L-seryl-tRNA(Sec) selenium transferase.